The primary structure comprises 469 residues: 6-phosphofructo-2-kinase/fructose-2,6-bisphosphatase 4 (469 aa).

The 6-phosphofructo-2-kinase stretch occupies residues 1–249 (MASPRELTQN…YYLMNIHVTP (249 aa)). Phosphoserine; by PKC is present on S29. 46–54 (GLPARGKTY) serves as a coordination point for ATP. The beta-D-fructose 6-phosphate site is built by R79 and R103. The active site involves D129. Beta-D-fructose 6-phosphate is bound by residues T131 and R137. Residue C159 is part of the active site. An ATP-binding site is contributed by 168–173 (NIVQVK). K173, R194, and Y198 together coordinate beta-D-fructose 6-phosphate. Residues 250–469 (RSIYLCRHGE…EALVTVPAHQ (220 aa)) are fructose-2,6-bisphosphatase. R256 is a beta-D-fructose 2,6-bisphosphate binding site. H257 functions as the Tele-phosphohistidine intermediate in the catalytic mechanism. Positions 263, 269, and 306 each coordinate beta-D-fructose 2,6-bisphosphate. The active-site Proton donor/acceptor is E326. Y337, R351, K355, Y366, Q392, and R396 together coordinate beta-D-fructose 2,6-bisphosphate. 348–351 (FALR) contacts ATP. Residues 392–396 (QAVMR) and Y428 each bind ATP. Phosphothreonine; by PKC is present on T444.

The protein in the C-terminal section; belongs to the phosphoglycerate mutase family. In terms of assembly, homodimer. In terms of tissue distribution, testis.

The catalysed reaction is beta-D-fructose 2,6-bisphosphate + H2O = beta-D-fructose 6-phosphate + phosphate. The enzyme catalyses beta-D-fructose 6-phosphate + ATP = beta-D-fructose 2,6-bisphosphate + ADP + H(+). Its activity is regulated as follows. The most important regulatory mechanism of these opposing activities is by phosphorylation and dephosphorylation of the enzyme. In terms of biological role, synthesis and degradation of fructose 2,6-bisphosphate. The polypeptide is 6-phosphofructo-2-kinase/fructose-2,6-bisphosphatase 4 (Pfkfb4) (Rattus norvegicus (Rat)).